A 551-amino-acid chain; its full sequence is Formate--tetrahydrofolate ligase (551 aa).

Position 54–61 (54–61) interacts with ATP; it reads TPPGEGKT.

This sequence belongs to the formate--tetrahydrofolate ligase family.

It carries out the reaction (6S)-5,6,7,8-tetrahydrofolate + formate + ATP = (6R)-10-formyltetrahydrofolate + ADP + phosphate. It participates in one-carbon metabolism; tetrahydrofolate interconversion. This is Formate--tetrahydrofolate ligase from Myxococcus xanthus (strain DK1622).